We begin with the raw amino-acid sequence, 756 residues long: MSTESKCPFNHAAGGGTTNRDWWPKQLNLKILHQHSSLSDPMGEDFDYAKEFKSLDFEAVKQDLRDVMTRSQDWWPADFGHYGPLFIRMAWHSAGTYRTGDGRGGAGAGQQRFAPLNSWPDNVSLDKARRLIWPVKQKYGRKISWADLIVLTGNVALESMGFKTFGFSGGRPDVWEPEEDVYWGSETTWLGGEERYGAQKKMQQPGDGTLVAEPENHANEESRTASGERNLENPLAAVQMGLIYVNPEGPEGVPDPVASARDIRETFGRMAMNDEETVALIAGGHAFGKTHGAGPADNVGPEPEAAGLEQQGFGWSNKFGTGKGGDTITSGLEVTWTSTPTQWSNEYLENLFAFDWELTKSPAGAHQWTPKNGAGAGKIPDAHDPSKRHAPSMLTSDLALRFDPAYEQISRRFLANPEQLADAFARAWFKLTHRDMGPLARYLGPETPTEELLWQDPIPDVTHPLVDDQDVAALKGKILDSGLSVSQLVSTAWAAASTFRGSDKRGGANGGRLRLAPQKDWAVNQPAQLANVLSTLESIQSEFNAAQSNGKKVSIADLIVLAGSAGVEQAAKNAGQQVTVPFTAGRADASQEQTDVESFSFLEPIADGFRNYQKGRYKVSAESLLVDKAQLLTLTAPEMTVLLGGLRVLNINVGQSKHGVFTDKPETLTNDFFKNLLDMAVEWKATSGANDTFEARDRKTGEVKWTGSRVDLVFGSHAQLRAISEVYGSADAQERFVKDFVAVWTKVMNLDRFDLA.

The segment at residues 91–244 (WHSAGTYRTG…LAAVQMGLIY (154 aa)) is a cross-link (tryptophyl-tyrosyl-methioninium (Trp-Tyr) (with M-270)). Catalysis depends on His92, which acts as the Proton acceptor. Residues 198–230 (AQKKMQQPGDGTLVAEPENHANEESRTASGERN) form a disordered region. A compositionally biased stretch (basic and acidic residues) spans 214-223 (PENHANEESR). Residues 244 to 270 (YVNPEGPEGVPDPVASARDIRETFGRM) constitute a cross-link (tryptophyl-tyrosyl-methioninium (Tyr-Met) (with W-91)). His285 contributes to the heme b binding site. The segment at 371–390 (KNGAGAGKIPDAHDPSKRHA) is disordered.

This sequence belongs to the peroxidase family. Peroxidase/catalase subfamily. In terms of assembly, homodimer or homotetramer. Heme b serves as cofactor. In terms of processing, formation of the three residue Trp-Tyr-Met cross-link is important for the catalase, but not the peroxidase activity of the enzyme.

It carries out the reaction H2O2 + AH2 = A + 2 H2O. The catalysed reaction is 2 H2O2 = O2 + 2 H2O. In terms of biological role, bifunctional enzyme with both catalase and broad-spectrum peroxidase activity. This is Catalase-peroxidase from Pseudomonas syringae pv. tomato (strain ATCC BAA-871 / DC3000).